Reading from the N-terminus, the 342-residue chain is GTPase Obg (342 aa).

Residues 1–159 (MKFIDEAKIY…RWIRLELKLL (159 aa)) enclose the Obg domain. One can recognise an OBG-type G domain in the interval 160 to 332 (ADVGIIGLPN…LLYKIGEALK (173 aa)). GTP contacts are provided by residues 166 to 173 (GLPNVGKS), 191 to 195 (FTTLT), 214 to 217 (DIPG), 284 to 287 (NKTD), and 313 to 315 (SAA). 2 residues coordinate Mg(2+): serine 173 and threonine 193.

It belongs to the TRAFAC class OBG-HflX-like GTPase superfamily. OBG GTPase family. Monomer. The cofactor is Mg(2+).

The protein localises to the cytoplasm. Functionally, an essential GTPase which binds GTP, GDP and possibly (p)ppGpp with moderate affinity, with high nucleotide exchange rates and a fairly low GTP hydrolysis rate. Plays a role in control of the cell cycle, stress response, ribosome biogenesis and in those bacteria that undergo differentiation, in morphogenesis control. The polypeptide is GTPase Obg (Syntrophus aciditrophicus (strain SB)).